The chain runs to 236 residues: Predicted GPI-anchored protein 43 (236 aa).

The signal sequence occupies residues 1–24 (MHQRNHHSILLTLLLYLQSIVALA). Residues asparagine 192, asparagine 195, and asparagine 198 are each glycosylated (N-linked (GlcNAc...) asparagine). A lipid anchor (GPI-anchor amidated glycine) is attached at glycine 208. Residues 209–236 (SVCLTSSYLNSPIIILCAILTGTLFAMY) constitute a propeptide, removed in mature form.

It is found in the cell membrane. In Candida albicans (strain SC5314 / ATCC MYA-2876) (Yeast), this protein is Predicted GPI-anchored protein 43 (PGA43).